Consider the following 265-residue polypeptide: Interleukin-1 alpha (265 aa).

The propeptide occupies 1–108 (MAKVPDLFED…DTEEVIMKPR (108 aa)). N6-acetyllysine is present on Lys78. A nuclear localization signal (NLS) region spans residues 78-82 (KKRRL). Phosphoserine is present on Ser83. 2 N-linked (GlcNAc...) asparagine glycosylation sites follow: Asn98 and Asn137.

This sequence belongs to the IL-1 family. Monomer. Interacts with TMED10; the interaction mediates the translocation from the cytoplasm into the ERGIC (endoplasmic reticulum-Golgi intermediate compartment) and thereby secretion. Interacts with IL1R1. Interacts with S100A13; this interaction is the first step in the export of IL1A, followed by direct translocation of this complex across the plasma membrane. Post-translationally, acetylated within its nuclear localization sequence, which impacts subcellular localization. Proteolytic processed by CAPN1 in a calcium-dependent manner. Cleavage from 31 kDa precursor to 18 kDa biologically active molecules. In terms of processing, phosphorylated. Phosphorylation greatly enhances susceptibility to digestion and promotes the conversion of pre-IL1A alpha to the biologically active IL1A.

It is found in the nucleus. Its subcellular location is the cytoplasm. The protein localises to the secreted. In terms of biological role, cytokine constitutively present intracellularly in nearly all resting non-hematopoietic cells that plays an important role in inflammation and bridges the innate and adaptive immune systems. After binding to its receptor IL1R1 together with its accessory protein IL1RAP, forms the high affinity interleukin-1 receptor complex. Signaling involves the recruitment of adapter molecules such as MYD88, IRAK1 or IRAK4. In turn, mediates the activation of NF-kappa-B and the three MAPK pathways p38, p42/p44 and JNK pathways. Within the cell, acts as an alarmin and cell death results in its liberation in the extracellular space after disruption of the cell membrane to induce inflammation and alert the host to injury or damage. In addition to its role as a danger signal, which occurs when the cytokine is passively released by cell necrosis, directly senses DNA damage and acts as signal for genotoxic stress without loss of cell integrity. This Canis lupus familiaris (Dog) protein is Interleukin-1 alpha (IL1A).